We begin with the raw amino-acid sequence, 352 residues long: Enhancer of mRNA-decapping protein 1 (352 aa).

Disordered regions lie at residues 1–258 (MMAH…PRNH) and 277–352 (QYPQ…SSKS). The span at 71 to 80 (HTSSNTSNNK) shows a compositional bias: low complexity. 2 stretches are compositionally biased toward polar residues: residues 93-104 (NFGNESSHQNGG) and 205-225 (TEPN…SVNV). Residues 289–309 (GGVYPMVAPQYQQQPQQHPQQ) show a composition bias toward low complexity.

It belongs to the EDC family.

It is found in the cytoplasm. Its function is as follows. mRNA-binding protein which stimulates mRNA decapping. This Debaryomyces hansenii (strain ATCC 36239 / CBS 767 / BCRC 21394 / JCM 1990 / NBRC 0083 / IGC 2968) (Yeast) protein is Enhancer of mRNA-decapping protein 1 (EDC1).